A 762-amino-acid chain; its full sequence is 5-methyltetrahydropteroyltriglutamate--homocysteine methyltransferase (762 aa).

Residues 17-20 and K111 each bind 5-methyltetrahydropteroyltri-L-glutamate; that span reads REWK. L-homocysteine-binding positions include 435 to 437 and E488; that span reads IGS. L-methionine contacts are provided by residues 435–437 and E488; that span reads IGS. 5-methyltetrahydropteroyltri-L-glutamate contacts are provided by residues 519–520 and W565; that span reads RC. An L-homocysteine-binding site is contributed by D603. L-methionine is bound at residue D603. E609 lines the 5-methyltetrahydropteroyltri-L-glutamate pocket. Residues H645, C647, and E669 each coordinate Zn(2+). The active-site Proton donor is H698. C730 contributes to the Zn(2+) binding site.

It belongs to the vitamin-B12 independent methionine synthase family. Zn(2+) is required as a cofactor.

The catalysed reaction is 5-methyltetrahydropteroyltri-L-glutamate + L-homocysteine = tetrahydropteroyltri-L-glutamate + L-methionine. Its pathway is amino-acid biosynthesis; L-methionine biosynthesis via de novo pathway; L-methionine from L-homocysteine (MetE route): step 1/1. Functionally, catalyzes the transfer of a methyl group from 5-methyltetrahydrofolate to homocysteine resulting in methionine formation. In Bacillus thuringiensis subsp. konkukian (strain 97-27), this protein is 5-methyltetrahydropteroyltriglutamate--homocysteine methyltransferase.